A 189-amino-acid polypeptide reads, in one-letter code: dCTP deaminase (189 aa).

Residues 112–117 (KSTYAR), 136–138 (TLE), glutamine 157, tyrosine 171, and glutamine 181 each bind dCTP. Glutamate 138 acts as the Proton donor/acceptor in catalysis.

The protein belongs to the dCTP deaminase family. As to quaternary structure, homotrimer.

It carries out the reaction dCTP + H2O + H(+) = dUTP + NH4(+). It functions in the pathway pyrimidine metabolism; dUMP biosynthesis; dUMP from dCTP (dUTP route): step 1/2. Catalyzes the deamination of dCTP to dUTP. This Alcanivorax borkumensis (strain ATCC 700651 / DSM 11573 / NCIMB 13689 / SK2) protein is dCTP deaminase.